A 369-amino-acid polypeptide reads, in one-letter code: D-glucosaminate-6-phosphate ammonia lyase (369 aa).

N6-(pyridoxal phosphate)lysine is present on Lys213.

The protein belongs to the SelA family. Pyridoxal 5'-phosphate serves as cofactor.

The catalysed reaction is 2-amino-2-deoxy-D-gluconate 6-phosphate = 2-dehydro-3-deoxy-6-phospho-D-gluconate + NH4(+). Its function is as follows. Involved in the catabolism of D-glucosaminate. Catalyzes the conversion of D-glucosaminate 6-phosphate to yield keto-3-deoxygluconate 6-phosphate (KDGP). The protein is D-glucosaminate-6-phosphate ammonia lyase of Salmonella typhimurium (strain 14028s / SGSC 2262).